Consider the following 421-residue polypeptide: Pyridinium-3,5-bisthiocarboxylic acid mononucleotide nickel insertion protein (421 aa).

Belongs to the LarC family.

The enzyme catalyses Ni(II)-pyridinium-3,5-bisthiocarboxylate mononucleotide = pyridinium-3,5-bisthiocarboxylate mononucleotide + Ni(2+). Functionally, involved in the biosynthesis of a nickel-pincer cofactor ((SCS)Ni(II) pincer complex). Binds Ni(2+), and functions in nickel delivery to pyridinium-3,5-bisthiocarboxylic acid mononucleotide (P2TMN), to form the mature cofactor. Is thus probably required for the activation of nickel-pincer cofactor-dependent enzymes. The protein is Pyridinium-3,5-bisthiocarboxylic acid mononucleotide nickel insertion protein of Alkaliphilus metalliredigens (strain QYMF).